The primary structure comprises 362 residues: Phosphoserine aminotransferase (362 aa).

Position 43 (Arg-43) interacts with L-glutamate. Pyridoxal 5'-phosphate contacts are provided by residues 77 to 78, Trp-103, Thr-153, Asp-173, and Gln-196; that span reads AS. Position 197 is an N6-(pyridoxal phosphate)lysine (Lys-197). 238-239 serves as a coordination point for pyridoxal 5'-phosphate; the sequence is NT.

It belongs to the class-V pyridoxal-phosphate-dependent aminotransferase family. SerC subfamily. Homodimer. Pyridoxal 5'-phosphate is required as a cofactor.

It localises to the cytoplasm. The enzyme catalyses O-phospho-L-serine + 2-oxoglutarate = 3-phosphooxypyruvate + L-glutamate. It carries out the reaction 4-(phosphooxy)-L-threonine + 2-oxoglutarate = (R)-3-hydroxy-2-oxo-4-phosphooxybutanoate + L-glutamate. It functions in the pathway amino-acid biosynthesis; L-serine biosynthesis; L-serine from 3-phospho-D-glycerate: step 2/3. The protein operates within cofactor biosynthesis; pyridoxine 5'-phosphate biosynthesis; pyridoxine 5'-phosphate from D-erythrose 4-phosphate: step 3/5. Its function is as follows. Catalyzes the reversible conversion of 3-phosphohydroxypyruvate to phosphoserine and of 3-hydroxy-2-oxo-4-phosphonooxybutanoate to phosphohydroxythreonine. The sequence is that of Phosphoserine aminotransferase (serC) from Niallia circulans (Bacillus circulans).